The primary structure comprises 301 residues: Protease HtpX (301 aa).

2 helical membrane-spanning segments follow: residues Ile-4–Ile-24 and Thr-44–Met-64. Position 150 (His-150) interacts with Zn(2+). Residue Glu-151 is part of the active site. His-154 is a Zn(2+) binding site. The next 2 membrane-spanning stretches (helical) occupy residues Leu-165–Val-185 and Phe-201–Trp-221. Position 227 (Glu-227) interacts with Zn(2+).

Belongs to the peptidase M48B family. It depends on Zn(2+) as a cofactor.

The protein resides in the cell inner membrane. The chain is Protease HtpX from Alkalilimnicola ehrlichii (strain ATCC BAA-1101 / DSM 17681 / MLHE-1).